Reading from the N-terminus, the 286-residue chain is NADPH-dependent 7-cyano-7-deazaguanine reductase (286 aa).

92–94 provides a ligand contact to substrate; that stretch reads IES. 94 to 95 contacts NADPH; that stretch reads SK. Residue C194 is the Thioimide intermediate of the active site. The active-site Proton donor is D201. 233–234 is a binding site for substrate; the sequence is HE. 262-263 provides a ligand contact to NADPH; sequence RG.

This sequence belongs to the GTP cyclohydrolase I family. QueF type 2 subfamily. In terms of assembly, homodimer.

The protein resides in the cytoplasm. It catalyses the reaction 7-aminomethyl-7-carbaguanine + 2 NADP(+) = 7-cyano-7-deazaguanine + 2 NADPH + 3 H(+). It functions in the pathway tRNA modification; tRNA-queuosine biosynthesis. Its function is as follows. Catalyzes the NADPH-dependent reduction of 7-cyano-7-deazaguanine (preQ0) to 7-aminomethyl-7-deazaguanine (preQ1). The protein is NADPH-dependent 7-cyano-7-deazaguanine reductase of Shewanella oneidensis (strain ATCC 700550 / JCM 31522 / CIP 106686 / LMG 19005 / NCIMB 14063 / MR-1).